A 146-amino-acid polypeptide reads, in one-letter code: Large ribosomal subunit protein uL15 (146 aa).

Positions methionine 1–arginine 13 are enriched in basic and acidic residues. Positions methionine 1–arginine 60 are disordered. Composition is skewed to gly residues over residues arginine 21 to alanine 31 and serine 42 to glycine 52.

The protein belongs to the universal ribosomal protein uL15 family. As to quaternary structure, part of the 50S ribosomal subunit.

In terms of biological role, binds to the 23S rRNA. The chain is Large ribosomal subunit protein uL15 from Lysinibacillus sphaericus (strain C3-41).